A 910-amino-acid polypeptide reads, in one-letter code: Epithelial discoidin domain-containing receptor 1 (910 aa).

The signal sequence occupies residues 1–19 (MGTGTLSSLLLLLLLVTIG). Residues 22 to 414 (DMKGHFDPAK…VAKAEGSPTA (393 aa)) lie on the Extracellular side of the membrane. The F5/8 type C domain maps to 32–186 (CRYALGMQDR…VCLRVELYGC (155 aa)). 2 disulfides stabilise this stretch: Cys32/Cys186 and Cys75/Cys178. The interval 193 to 368 (LSYTAPVGQT…LFSEISFISD (176 aa)) is DS-like domain. Ca(2+) contacts are provided by Asn212, Gln231, Asp234, Val236, Tyr254, and Tyr256. Asn212 is a glycosylation site (N-linked (GlcNAc...) asparagine). N-linked (GlcNAc...) asparagine glycosylation occurs at Asn261. Cys304 and Cys349 form a disulfide bridge. Positions 361 and 362 each coordinate Ca(2+). N-linked (GlcNAc...) asparagine glycosylation is found at Asn371 and Asn391. A helical transmembrane segment spans residues 415 to 435 (ILIGCLVAIILLLLLIIALML). The Cytoplasmic segment spans residues 436–910 (WRLHWRRLLS…FLADDALNTV (475 aa)). The segment at 467-494 (ILINNRPGPREPPPYQEPRPRGTPTHSA) is disordered. Positions 478-481 (PPPY) match the PPxY motif motif. Phosphotyrosine; by autocatalysis is present on residues Tyr481, Tyr510, and Tyr517. The 296-residue stretch at 607–902 (LRFKEKLGEG…PPFSQLHRFL (296 aa)) folds into the Protein kinase domain. Residues 613 to 621 (LGEGQFGEV) and Lys652 contribute to the ATP site. Tyr737 carries the post-translational modification Phosphotyrosine; by autocatalysis. Catalysis depends on Asp763, which acts as the Proton acceptor. Residues Tyr789, Tyr793, and Tyr794 each carry the phosphotyrosine; by autocatalysis modification.

It belongs to the protein kinase superfamily. Tyr protein kinase family. Insulin receptor subfamily. In terms of assembly, homodimer. Interacts (via PPxY motif) with WWC1 (via WW domains) in a collagen-regulated manner. Forms a tripartite complex with WWC1 and PRKCZ, but predominantly in the absence of collagen. Interacts (tyrosine phosphorylated) with SHC1. Interacts with SRC. Interacts with MYH9. Interacts with CDH1. Interacts with PTPN11. Interacts with NCK2. Post-translationally, autophosphorylated in response to fibrillar collagen binding. In terms of tissue distribution, various embryonic and adult tissues; also proliferative zones of the developing brain; hippocampal neurons.

The protein resides in the cell membrane. The catalysed reaction is L-tyrosyl-[protein] + ATP = O-phospho-L-tyrosyl-[protein] + ADP + H(+). In terms of biological role, tyrosine kinase that functions as a cell surface receptor for fibrillar collagen and regulates cell attachment to the extracellular matrix, remodeling of the extracellular matrix, cell migration, differentiation, survival and cell proliferation. Collagen binding triggers a signaling pathway that involves SRC and leads to the activation of MAP kinases. Regulates remodeling of the extracellular matrix by up-regulation of the matrix metalloproteinases MMP2, MMP7 and MMP9, and thereby facilitates cell migration and wound healing. Promotes smooth muscle cell migration, and thereby contributes to arterial wound healing. Also plays a role in tumor cell invasion. Phosphorylates PTPN11. Required for normal blastocyst implantation during pregnancy, for normal mammary gland differentiation and normal lactation. Required for normal ear morphology and normal hearing. The polypeptide is Epithelial discoidin domain-containing receptor 1 (Ddr1) (Rattus norvegicus (Rat)).